The primary structure comprises 242 residues: 3-oxoacyl-[acyl-carrier-protein] reductase FabG (242 aa).

NADP(+) is bound by residues 9–12, arginine 34, 60–61, and asparagine 87; these read GSSR and DV. A substrate-binding site is contributed by serine 140. Tyrosine 153 functions as the Proton acceptor in the catalytic mechanism. Residues 153 to 157 and isoleucine 186 each bind NADP(+); that span reads YSASK.

This sequence belongs to the short-chain dehydrogenases/reductases (SDR) family. As to quaternary structure, homotetramer.

The enzyme catalyses a (3R)-hydroxyacyl-[ACP] + NADP(+) = a 3-oxoacyl-[ACP] + NADPH + H(+). The protein operates within lipid metabolism; fatty acid biosynthesis. Catalyzes the NADPH-dependent reduction of beta-ketoacyl-ACP substrates to beta-hydroxyacyl-ACP products, the first reductive step in the elongation cycle of fatty acid biosynthesis. This chain is 3-oxoacyl-[acyl-carrier-protein] reductase FabG (fabG), found in Aggregatibacter actinomycetemcomitans (Actinobacillus actinomycetemcomitans).